Reading from the N-terminus, the 540-residue chain is V-set and immunoglobulin domain-containing protein 10 (540 aa).

The N-terminal stretch at 1 to 30 (MAAGGSAPEPRVLVCLGALLAGWVAVGLEA) is a signal peptide. 4 consecutive Ig-like C2-type domains span residues 31 to 119 (VVIG…WLQV), 123 to 215 (PYQI…RKVT), 223 to 309 (PPPS…VQIR), and 311 to 404 (PSLL…IWLS). Residues 31–413 (VVIGEVHENV…SVKEPLNIGG (383 aa)) are Extracellular-facing. 8 N-linked (GlcNAc...) asparagine glycosylation sites follow: Asn-39, Asn-46, Asn-70, Asn-108, Asn-138, Asn-171, Asn-180, and Asn-198. The cysteines at positions 44 and 103 are disulfide-linked. Intrachain disulfides connect Cys-153–Cys-201 and Cys-245–Cys-290. Residue Asn-326 is glycosylated (N-linked (GlcNAc...) asparagine). Residues Cys-331 and Cys-388 are joined by a disulfide bond. A helical transmembrane segment spans residues 414 to 434 (IVGTIVSLLLLGLAIISGLLL). Residues 435–540 (HYSPVFCWKV…DIVQEEDRPV (106 aa)) are Cytoplasmic-facing. Residues 461–477 (DSEEEEEEEEEEEEDAA) are compositionally biased toward acidic residues. Disordered regions lie at residues 461–500 (DSEE…QDHI) and 513–540 (QMGN…DRPV). Residues 482–500 (EGAREREELPKEIPKQDHI) show a composition bias toward basic and acidic residues. The segment covering 521–534 (LQDDSSEEQSDIVQ) has biased composition (acidic residues).

It localises to the membrane. This chain is V-set and immunoglobulin domain-containing protein 10 (VSIG10), found in Homo sapiens (Human).